We begin with the raw amino-acid sequence, 301 residues long: Methionyl-tRNA formyltransferase (301 aa).

(6S)-5,6,7,8-tetrahydrofolate is bound at residue 110-113 (SLLP).

Belongs to the Fmt family.

It catalyses the reaction L-methionyl-tRNA(fMet) + (6R)-10-formyltetrahydrofolate = N-formyl-L-methionyl-tRNA(fMet) + (6S)-5,6,7,8-tetrahydrofolate + H(+). Functionally, attaches a formyl group to the free amino group of methionyl-tRNA(fMet). The formyl group appears to play a dual role in the initiator identity of N-formylmethionyl-tRNA by promoting its recognition by IF2 and preventing the misappropriation of this tRNA by the elongation apparatus. This is Methionyl-tRNA formyltransferase from Anaplasma phagocytophilum (strain HZ).